The sequence spans 2128 residues: Spectrin beta chain, erythrocytic (2128 aa).

Residues 1-15 (MTSATEFENVGNQPP) are compositionally biased toward polar residues. The tract at residues 1 to 30 (MTSATEFENVGNQPPFSRINARWDAPDDEL) is disordered. Residues 2–275 (TSATEFENVG…IITYVVAFYH (274 aa)) are actin-binding. S36 carries the phosphoserine modification. 2 consecutive Calponin-homology (CH) domains span residues 54–158 (VVQK…LRFQ) and 173–278 (RSAK…HYFS). T104 carries the post-translational modification Phosphothreonine. Spectrin repeat units lie at residues 303–411 (MIEK…LALR), 416–517 (RQEF…QRLE), 521–627 (ALQK…QLEQ), 630–733 (RLWK…DLQD), 736–838 (NFFQ…KLQE), 845–942 (VFGE…REAV), 950–1050 (NYCV…LSLG), 1054–1157 (KLQA…NTLT), 1162–1250 (FQEF…RHKK), 1267–1368 (ELQN…EQLS), 1381–1455 (ADLN…FLDL), 1473–1574 (LQIS…RLRD), 1576–1680 (HEAQ…RLEN), 1682–1784 (YHLF…MQLL), 1789–1890 (DLHR…RAQL), 1897–1997 (FRFF…DRLH), and 2004–2064 (QFSR…KPTT). A Phosphoserine modification is found at S1289. S2034 bears the Phosphoserine mark. Residues 2062-2108 (PTTLELKERQTPERPTEEPGPQEEEGETAGEAPQVHHAATERTSPVS) form a disordered region. Residues T2064, T2072, and T2101 each carry the phosphothreonine modification. Residues 2066–2078 (ELKERQTPERPTE) show a composition bias toward basic and acidic residues. Residues S2105, S2108, S2114, S2116, and S2119 each carry the phosphoserine modification.

It belongs to the spectrin family. In terms of assembly, composed of nonhomologous chains, alpha and beta, which aggregate to form dimers, tetramers, and higher polymers. Interacts with BCAM.

Its subcellular location is the cytoplasm. The protein resides in the cytoskeleton. The protein localises to the cell cortex. Functionally, spectrin is the major constituent of the cytoskeletal network underlying the erythrocyte plasma membrane. It associates with band 4.1 and actin to form the cytoskeletal superstructure of the erythrocyte plasma membrane. This is Spectrin beta chain, erythrocytic (Sptb) from Mus musculus (Mouse).